A 311-amino-acid polypeptide reads, in one-letter code: Malate dehydrogenase (311 aa).

Residues 10-15 (GAGRVG) and D35 each bind NAD(+). R84 and R90 together coordinate substrate. NAD(+) is bound by residues N97 and 120 to 122 (VTN). 2 residues coordinate substrate: N122 and R153. The active-site Proton acceptor is H177.

This sequence belongs to the LDH/MDH superfamily. MDH type 3 family.

It carries out the reaction (S)-malate + NAD(+) = oxaloacetate + NADH + H(+). Functionally, catalyzes the reversible oxidation of malate to oxaloacetate. This Nitrosococcus oceani (strain ATCC 19707 / BCRC 17464 / JCM 30415 / NCIMB 11848 / C-107) protein is Malate dehydrogenase.